A 412-amino-acid polypeptide reads, in one-letter code: tRNA N6-adenosine threonylcarbamoyltransferase, mitochondrial (412 aa).

A mitochondrion-targeting transit peptide spans 1 to 78; the sequence is MLCLVYNSIL…IICLNTHRTI (78 aa). Residues His-157 and His-161 each coordinate a divalent metal cation. Substrate contacts are provided by residues 179–183, Asp-212, Ala-228, Glu-232, 328–329, and Ser-363; these read LVSGG and RN. An a divalent metal cation-binding site is contributed by Asp-364.

It belongs to the KAE1 / TsaD family. As to quaternary structure, homodimer. A divalent metal cation serves as cofactor.

The protein localises to the mitochondrion. It carries out the reaction L-threonylcarbamoyladenylate + adenosine(37) in tRNA = N(6)-L-threonylcarbamoyladenosine(37) in tRNA + AMP + H(+). Required for the formation of a threonylcarbamoyl group on adenosine at position 37 (t(6)A37) in mitochondrial tRNAs that read codons beginning with adenine. Probably involved in the transfer of the threonylcarbamoyl moiety of threonylcarbamoyl-AMP (TC-AMP) to the N6 group of A37. Involved in mitochondrial genome maintenance. The chain is tRNA N6-adenosine threonylcarbamoyltransferase, mitochondrial (pgp1) from Schizosaccharomyces pombe (strain 972 / ATCC 24843) (Fission yeast).